A 560-amino-acid chain; its full sequence is Probable pectinesterase/pectinesterase inhibitor 20 (560 aa).

Positions methionine 1–alanine 24 are cleaved as a signal peptide. The segment at glutamine 25–leucine 179 is pectinesterase inhibitor 20. Residues asparagine 31, asparagine 168, asparagine 251, asparagine 255, asparagine 268, asparagine 307, and asparagine 314 are each glycosylated (N-linked (GlcNAc...) asparagine). Residues valine 246–glutamate 544 form a pectinesterase 20 region. A substrate-binding site is contributed by threonine 323. A glycan (N-linked (GlcNAc...) asparagine) is linked at asparagine 340. Glutamine 353 lines the substrate pocket. Aspartate 376 (proton donor; for pectinesterase activity) is an active-site residue. The cysteines at positions 390 and 410 are disulfide-linked. Residue aspartate 397 is the Nucleophile; for pectinesterase activity of the active site. The interval proline 417–isoleucine 441 is disordered. Residues lysine 419–threonine 439 show a composition bias toward polar residues. N-linked (GlcNAc...) asparagine glycosylation occurs at asparagine 456. Substrate contacts are provided by arginine 465 and tryptophan 467. 3 N-linked (GlcNAc...) asparagine glycosylation sites follow: asparagine 507, asparagine 528, and asparagine 534.

This sequence in the N-terminal section; belongs to the PMEI family. In the C-terminal section; belongs to the pectinesterase family. Expressed in flower buds.

It localises to the secreted. The protein resides in the cell wall. It catalyses the reaction [(1-&gt;4)-alpha-D-galacturonosyl methyl ester](n) + n H2O = [(1-&gt;4)-alpha-D-galacturonosyl](n) + n methanol + n H(+). It functions in the pathway glycan metabolism; pectin degradation; 2-dehydro-3-deoxy-D-gluconate from pectin: step 1/5. In terms of biological role, acts in the modification of cell walls via demethylesterification of cell wall pectin. In Arabidopsis thaliana (Mouse-ear cress), this protein is Probable pectinesterase/pectinesterase inhibitor 20 (PME20).